The sequence spans 345 residues: N-acetyl-gamma-glutamyl-phosphate reductase (345 aa).

Cysteine 149 is an active-site residue.

It belongs to the NAGSA dehydrogenase family. Type 1 subfamily.

Its subcellular location is the cytoplasm. The enzyme catalyses N-acetyl-L-glutamate 5-semialdehyde + phosphate + NADP(+) = N-acetyl-L-glutamyl 5-phosphate + NADPH + H(+). Its pathway is amino-acid biosynthesis; L-arginine biosynthesis; N(2)-acetyl-L-ornithine from L-glutamate: step 3/4. Its function is as follows. Catalyzes the NADPH-dependent reduction of N-acetyl-5-glutamyl phosphate to yield N-acetyl-L-glutamate 5-semialdehyde. In Bacillus anthracis, this protein is N-acetyl-gamma-glutamyl-phosphate reductase.